The following is a 619-amino-acid chain: CREB-regulated transcription coactivator 3 (619 aa).

Phosphoserine occurs at positions 4 and 62. Residues 129–148 are disordered; the sequence is SQHLDESWPRQQPPWKEEKH. Threonine 160 carries the post-translational modification Phosphothreonine. At serine 162 the chain carries Phosphoserine; by SIK2. Lysine 232 is covalently cross-linked (Glycyl lysine isopeptide (Lys-Gly) (interchain with G-Cter in SUMO2)). A phosphoserine mark is found at serine 273, serine 329, serine 332, serine 370, serine 391, serine 396, and serine 410. Residues 375–478 form a disordered region; it reads STTNLSGPSR…TQQPQAAPSL (104 aa). The interval 380–401 is required for interaction with PPP2CA and PPP2R1A; that stretch reads SGPSRRRQPPVSPLTLSPGPEA. Composition is skewed to polar residues over residues 405–415 and 422–431; these read FSRQLSATSPL and QMVTSEQSPL. Serine 443 carries the post-translational modification Phosphoserine. The span at 443–454 shows a compositional bias: pro residues; that stretch reads SPPPPYPTPQEL. The segment covering 455–478 has biased composition (low complexity); the sequence is PQPLLQQPHAQEPPTQQPQAAPSL.

It belongs to the TORC family. As to quaternary structure, binding, as a tetramer, through its N-terminal region, with the bZIP domain of CREB1 enhances recruitment of TAF4 to the promoter. 'Arg-314' in the bZIP domain of CREB1 is essential for this interaction. Interacts (when phosphorylated at Ser-162 and Se-273) with 14-3-3 proteins. Interacts with YWHAE. Interacts (when phosphorylated at Ser-391) with phosphatase PP2A catalytic subunit PPP2CA and regulatory subunits PPP2R1A and PPP2R2A. Phosphorylation/dephosphorylation states of Ser-273 are required for regulating transduction of CREB activity. CRTCs/TORCs are inactive when phosphorylated, and active when dephosphorylated at this site. May be phosphorylated at Ser-391 by MAPK3/ERK1 and/or MAPK1/ERK2 or by some cyclin-dependent kinases such as CDK1,CDK2 or CDK5. Following adenylyl cyclase activation, dephosphorylated at Ser-162 and Ser-273 resulting in its dissociation from 14-3-3 proteins probably promoting CRTC3 translocation into the nucleus. As to expression, expressed in brown adipose tissues.

The protein localises to the nucleus. The protein resides in the cytoplasm. Functionally, transcriptional coactivator for CREB1 which activates transcription through both consensus and variant cAMP response element (CRE) sites. Acts as a coactivator, in the SIK/TORC signaling pathway, being active when dephosphorylated. Acts independently of CREB1 'Ser-133' phosphorylation. Enhances the interaction of CREB1 with TAF4. Regulates the expression of specific CREB-activated genes such as the steroidogenic gene, StAR. Potent coactivator of PPARGC1A and inducer of mitochondrial biogenesis in muscle cells. The sequence is that of CREB-regulated transcription coactivator 3 (Crtc3) from Mus musculus (Mouse).